Consider the following 205-residue polypeptide: uncharacterized protein (205 aa).

An HTH tetR-type domain is found at 11-71 (DKRQAEILEA…RIIETGLDEG (61 aa)). The H-T-H motif DNA-binding region spans 34 to 53 (TMKDVVEESGFSRGGVYLYF).

This is an uncharacterized protein from Bacillus subtilis (strain 168).